The primary structure comprises 520 residues: RNA-binding protein MEX3A (520 aa).

The segment at 49–111 (GLGEPPAPTA…QPPTAPKGAS (63 aa)) is disordered. Positions 60–69 (EDGGGGGGGA) are enriched in gly residues. Positions 73 to 91 (PAAPPQPAPPPPPAAPPAA) are enriched in pro residues. KH domains follow at residues 132–193 (TTEC…RREI) and 223–284 (QVTI…REEI). S338 carries the post-translational modification Phosphoserine. The segment at 412–461 (SSSSAKARAGPPGAHRSPATSAGPELAGLPRRPPGEPLQGFSKLGGGGLR) is disordered. S462 bears the Phosphoserine mark. The segment at 469 to 509 (CMVCFESEVTAALVPCGHNLFCMECAVRICERTDPECPVCH) adopts an RING-type zinc-finger fold.

In terms of processing, phosphorylated. As to expression, highest levels found in fetal brain and testis. Detected also in thymus, salivary gland and uterus.

The protein localises to the cytoplasm. It is found in the nucleus. The protein resides in the P-body. Its function is as follows. RNA binding protein, may be involved in post-transcriptional regulatory mechanisms. The chain is RNA-binding protein MEX3A (MEX3A) from Homo sapiens (Human).